A 359-amino-acid polypeptide reads, in one-letter code: 3-dehydroquinate synthase (359 aa).

Residues 70–75, 105–109, 129–130, Lys142, Lys151, and 169–172 each bind NAD(+); these read DGEQYK, GVIGD, TT, and FYKT. Zn(2+) contacts are provided by Glu184, His247, and His264.

The protein belongs to the sugar phosphate cyclases superfamily. Dehydroquinate synthase family. Co(2+) is required as a cofactor. The cofactor is Zn(2+). NAD(+) serves as cofactor.

The protein resides in the cytoplasm. It carries out the reaction 7-phospho-2-dehydro-3-deoxy-D-arabino-heptonate = 3-dehydroquinate + phosphate. The protein operates within metabolic intermediate biosynthesis; chorismate biosynthesis; chorismate from D-erythrose 4-phosphate and phosphoenolpyruvate: step 2/7. Functionally, catalyzes the conversion of 3-deoxy-D-arabino-heptulosonate 7-phosphate (DAHP) to dehydroquinate (DHQ). The sequence is that of 3-dehydroquinate synthase from Francisella tularensis subsp. mediasiatica (strain FSC147).